The sequence spans 445 residues: Glycine--tRNA ligase (445 aa).

Substrate-binding residues include Arg97 and Glu145. Residues 177–179 (RNE), 187–192 (FRTCEF), 262–263 (EV), and 308–311 (GLTR) contribute to the ATP site. 192 to 196 (FEQME) contacts substrate. Position 304-308 (304-308 (ETSAG)) interacts with substrate.

This sequence belongs to the class-II aminoacyl-tRNA synthetase family. Homodimer.

The protein resides in the cytoplasm. The catalysed reaction is tRNA(Gly) + glycine + ATP = glycyl-tRNA(Gly) + AMP + diphosphate. In terms of biological role, catalyzes the attachment of glycine to tRNA(Gly). The sequence is that of Glycine--tRNA ligase from Borrelia garinii subsp. bavariensis (strain ATCC BAA-2496 / DSM 23469 / PBi) (Borreliella bavariensis).